We begin with the raw amino-acid sequence, 243 residues long: 1-(5-phosphoribosyl)-5-[(5-phosphoribosylamino)methylideneamino] imidazole-4-carboxamide isomerase (243 aa).

Asp-17 acts as the Proton acceptor in catalysis. The active-site Proton donor is Asp-138.

The protein belongs to the HisA/HisF family.

The protein resides in the cytoplasm. The catalysed reaction is 1-(5-phospho-beta-D-ribosyl)-5-[(5-phospho-beta-D-ribosylamino)methylideneamino]imidazole-4-carboxamide = 5-[(5-phospho-1-deoxy-D-ribulos-1-ylimino)methylamino]-1-(5-phospho-beta-D-ribosyl)imidazole-4-carboxamide. It participates in amino-acid biosynthesis; L-histidine biosynthesis; L-histidine from 5-phospho-alpha-D-ribose 1-diphosphate: step 4/9. This Deinococcus geothermalis (strain DSM 11300 / CIP 105573 / AG-3a) protein is 1-(5-phosphoribosyl)-5-[(5-phosphoribosylamino)methylideneamino] imidazole-4-carboxamide isomerase.